A 229-amino-acid polypeptide reads, in one-letter code: Potassium/proton antiporter CemA (229 aa).

4 helical membrane passes run 7–27, 114–134, 154–174, and 189–209; these read FTPL…SFSF, IISF…LVVL, ILLL…ELMI, and IISG…KYWI.

Belongs to the CemA family.

It localises to the plastid. The protein localises to the chloroplast inner membrane. It catalyses the reaction K(+)(in) + H(+)(out) = K(+)(out) + H(+)(in). Contributes to K(+)/H(+) antiport activity by supporting proton efflux to control proton extrusion and homeostasis in chloroplasts in a light-dependent manner to modulate photosynthesis. Prevents excessive induction of non-photochemical quenching (NPQ) under continuous-light conditions. Indirectly promotes efficient inorganic carbon uptake into chloroplasts. The sequence is that of Potassium/proton antiporter CemA from Nandina domestica (Heavenly bamboo).